Reading from the N-terminus, the 323-residue chain is Beta-ketoacyl-[acyl-carrier-protein] synthase III (323 aa).

Residues Cys113 and His250 contribute to the active site. An ACP-binding region spans residues 251-255 (QANKR). Residue Asn280 is part of the active site.

Belongs to the thiolase-like superfamily. FabH family. Homodimer.

Its subcellular location is the cytoplasm. It catalyses the reaction malonyl-[ACP] + acetyl-CoA + H(+) = 3-oxobutanoyl-[ACP] + CO2 + CoA. It functions in the pathway lipid metabolism; fatty acid biosynthesis. Catalyzes the condensation reaction of fatty acid synthesis by the addition to an acyl acceptor of two carbons from malonyl-ACP. Catalyzes the first condensation reaction which initiates fatty acid synthesis and may therefore play a role in governing the total rate of fatty acid production. Possesses both acetoacetyl-ACP synthase and acetyl transacylase activities. Its substrate specificity determines the biosynthesis of branched-chain and/or straight-chain of fatty acids. The sequence is that of Beta-ketoacyl-[acyl-carrier-protein] synthase III from Brucella anthropi (strain ATCC 49188 / DSM 6882 / CCUG 24695 / JCM 21032 / LMG 3331 / NBRC 15819 / NCTC 12168 / Alc 37) (Ochrobactrum anthropi).